A 447-amino-acid polypeptide reads, in one-letter code: Phosphoglucosamine mutase (447 aa).

Catalysis depends on Ser-103, which acts as the Phosphoserine intermediate. Mg(2+)-binding residues include Ser-103, Asp-242, Asp-244, and Asp-246. Residue Ser-103 is modified to Phosphoserine.

It belongs to the phosphohexose mutase family. It depends on Mg(2+) as a cofactor. In terms of processing, activated by phosphorylation.

The enzyme catalyses alpha-D-glucosamine 1-phosphate = D-glucosamine 6-phosphate. Its function is as follows. Catalyzes the conversion of glucosamine-6-phosphate to glucosamine-1-phosphate. The protein is Phosphoglucosamine mutase of Cereibacter sphaeroides (strain ATCC 17025 / ATH 2.4.3) (Rhodobacter sphaeroides).